Reading from the N-terminus, the 237-residue chain is Mitochondrial inner membrane protease atp23 (237 aa).

A compositionally biased stretch (polar residues) spans 1–13 (MSDSQPCSTPSTR). Positions 1 to 23 (MSDSQPCSTPSTRGKSDSGYIPG) are disordered. An a divalent metal cation-binding site is contributed by His-136. Glu-137 is a catalytic residue. A divalent metal cation is bound at residue His-140.

Belongs to the peptidase M76 family.

The protein resides in the mitochondrion inner membrane. Functionally, has a dual role in the assembly of mitochondrial ATPase. Acts as a protease that removes N-terminal residues of mitochondrial ATPase CF(0) subunit 6 at the intermembrane space side. Also involved in the correct assembly of the membrane-embedded ATPase CF(0) particle, probably mediating association of subunit 6 with the subunit 9 ring. This chain is Mitochondrial inner membrane protease atp23 (atp23), found in Aspergillus fumigatus (strain ATCC MYA-4609 / CBS 101355 / FGSC A1100 / Af293) (Neosartorya fumigata).